Consider the following 255-residue polypeptide: 1-(5-phosphoribosyl)-5-[(5-phosphoribosylamino)methylideneamino] imidazole-4-carboxamide isomerase (255 aa).

The active-site Proton acceptor is D8. D129 (proton donor) is an active-site residue.

The protein belongs to the HisA/HisF family.

It is found in the cytoplasm. It carries out the reaction 1-(5-phospho-beta-D-ribosyl)-5-[(5-phospho-beta-D-ribosylamino)methylideneamino]imidazole-4-carboxamide = 5-[(5-phospho-1-deoxy-D-ribulos-1-ylimino)methylamino]-1-(5-phospho-beta-D-ribosyl)imidazole-4-carboxamide. Its pathway is amino-acid biosynthesis; L-histidine biosynthesis; L-histidine from 5-phospho-alpha-D-ribose 1-diphosphate: step 4/9. In Synechococcus sp. (strain CC9902), this protein is 1-(5-phosphoribosyl)-5-[(5-phosphoribosylamino)methylideneamino] imidazole-4-carboxamide isomerase.